Consider the following 79-residue polypeptide: Large ribosomal subunit protein uL24 (79 aa).

Belongs to the universal ribosomal protein uL24 family. In terms of assembly, part of the 50S ribosomal subunit.

Its function is as follows. One of two assembly initiator proteins, it binds directly to the 5'-end of the 23S rRNA, where it nucleates assembly of the 50S subunit. Functionally, one of the proteins that surrounds the polypeptide exit tunnel on the outside of the subunit. The chain is Large ribosomal subunit protein uL24 from Lactobacillus gasseri (strain ATCC 33323 / DSM 20243 / BCRC 14619 / CIP 102991 / JCM 1131 / KCTC 3163 / NCIMB 11718 / NCTC 13722 / AM63).